Here is a 147-residue protein sequence, read N- to C-terminus: Globin, major monomeric component (147 aa).

The region spanning 1–146 (GLSAAQRQVI…ISGALISGLQ (146 aa)) is the Globin domain. A heme b-binding site is contributed by His90.

This sequence belongs to the globin family. As to quaternary structure, monomer.

In Glycera dibranchiata (Bloodworm), this protein is Globin, major monomeric component.